The chain runs to 295 residues: MHARMSVEIPQQDVMIVTGMSGAGRSTVGNALEDLGWYVVDNLPPQMLKPLVELAGRAGTSLPKIAAVVDVRGGDFFSELRDILHTFGTGPRLRVLFLEATDAALVRRFEQVRRPHPLQGNGTLLDGIAAERARMIEIREASDLVIDTSELNIHQLATTITEQFSGADDAGVRVTVMSFGFKYGTPADADMVADMRFLPNPFWTPELRPLTGRDKAVSDYVLGQEGAEEFVHAYARALAPVLAGYQRENKRHATIAIGCTGGKHRSVAVSEELSSLLRALPGVAVSTKHRDLGRE.

19 to 26 contacts ATP; that stretch reads GMSGAGRS. Residue 70-73 coordinates GTP; that stretch reads DVRG.

The protein belongs to the RapZ-like family.

Functionally, displays ATPase and GTPase activities. In Clavibacter sepedonicus (Clavibacter michiganensis subsp. sepedonicus), this protein is Nucleotide-binding protein CMS1991.